Reading from the N-terminus, the 535-residue chain is Arylsulfatase K (535 aa).

The first 21 residues, 1–21 (MGSGGPLLLLRGLLLVGAAYC), serve as a signal peptide directing secretion. Ca(2+) is bound by residues aspartate 41 and cysteine 81. Cysteine 81 (nucleophile) is an active-site residue. Cysteine 81 carries the post-translational modification 3-oxoalanine (Cys). Lysine 129 lines the substrate pocket. Asparagine 194 carries an N-linked (GlcNAc...) asparagine glycan. Histidine 252 is a substrate binding site. A glycan (N-linked (GlcNAc...) asparagine) is linked at asparagine 263. Positions 314 and 315 each coordinate Ca(2+). Residues asparagine 376, asparagine 414, and asparagine 499 are each glycosylated (N-linked (GlcNAc...) asparagine).

The protein belongs to the sulfatase family. Ca(2+) is required as a cofactor. The conversion to 3-oxoalanine (also known as C-formylglycine, FGly), of a serine or cysteine residue in prokaryotes and of a cysteine residue in eukaryotes, is critical for catalytic activity.

The protein localises to the secreted. It is found in the lysosome. It catalyses the reaction an aryl sulfate + H2O = a phenol + sulfate + H(+). The catalysed reaction is Hydrolysis of the 2-sulfate groups of the 2-O-sulfo-D-glucuronate residues of chondroitin sulfate, heparin and heparitin sulfate.. Catalyzes the hydrolysis of pseudosubstrates such as p-nitrocatechol sulfate and p-nitrophenyl sulfate. Catalyzes the hydrolysis of the 2-sulfate groups of the 2-O-sulfo-D-glucuronate residues of chondroitin sulfate, heparin and heparitin sulfate. Acts selectively on 2-sulfoglucuronate and lacks activity against 2-sulfoiduronate. This is Arylsulfatase K (ARSK) from Gallus gallus (Chicken).